We begin with the raw amino-acid sequence, 208 residues long: EF-hand protein 5 variant 2 (208 aa).

The tract at residues 1–35 (MQARGTVKVQGDANVDGKMSTGQHPHHQHLNSTQA) is disordered. EF-hand domains follow at residues 64 to 98 (MAEG…HLTE), 99 to 134 (EEFH…EVDD), 135 to 170 (TMAD…LAER), and 171 to 206 (STPE…SRVN). Glu118, Asp123, Asp148, Thr152, and Tyr154 together coordinate Ca(2+).

This chain is EF-hand protein 5 variant 2, found in Trypanosoma cruzi.